The sequence spans 258 residues: Protein OS-9 homolog (258 aa).

Positions 1-18 are cleaved as a signal peptide; it reads MNWTSLVYLWFIFKSIFA. Asn2, Asn51, and Asn70 each carry an N-linked (GlcNAc...) asparagine glycan. An MRH domain is found at 114-237; that stretch reads TSCVFSFNLH…HINVPKLCSL (124 aa). Cys116 and Cys132 are oxidised to a cystine. Trp127 and Gln139 together coordinate a mannooligosaccharide derivative. An N-linked (GlcNAc...) asparagine glycan is attached at Asn165. Cystine bridges form between Cys193-Cys223 and Cys208-Cys235. Residues Asp194, Arg200, Glu219, and Tyr225 each contribute to the a mannooligosaccharide derivative site.

It belongs to the OS-9 family. As to quaternary structure, interacts with missfolded ER lumenal proteins.

The protein localises to the endoplasmic reticulum membrane. Lectin involved in the quality control of the secretory pathway. As a member of the endoplasmic reticulum-associated degradation lumenal (ERAD-L) surveillance system, targets misfolded endoplasmic reticulum lumenal glycoproteins for degradation. This Candida albicans (strain SC5314 / ATCC MYA-2876) (Yeast) protein is Protein OS-9 homolog (YOS9).